Here is a 395-residue protein sequence, read N- to C-terminus: Syncephapepsin (395 aa).

An N-terminal signal peptide occupies residues 1–19 (MKFSLALLATVALATISQA). Positions 20–71 (APVEKQVAGKPFQLVKNPHYQANATRAIFRAEKKYARHTAIPEQGKTIVKSA) are cleaved as a propeptide — activation peptide. The Peptidase A1 domain occupies 89–391 (YYATVSVGTP…NQGVPEVQIA (303 aa)). D107 is an active-site residue. C120 and C123 are joined by a disulfide. D288 is a catalytic residue. The cysteines at positions 322 and 355 are disulfide-linked.

This sequence belongs to the peptidase A1 family. As to quaternary structure, monomer.

Hydrolysis of proteins with a broad specificity. Residues recognized to be cleaved were primarily those of trypsin and chymotrypsin and Lys was the most susceptible. The polypeptide is Syncephapepsin (SPSR) (Syncephalastrum racemosum (Filamentous fungus)).